Consider the following 390-residue polypeptide: S-adenosylmethionine synthase 3 (390 aa).

Position 9 (Glu-9) interacts with Mg(2+). His-15 is a binding site for ATP. Glu-43 contributes to the K(+) binding site. Residues Glu-56 and Gln-99 each coordinate L-methionine. ATP contacts are provided by residues 167-169 (DGK), 235-238 (SGRF), Asp-246, 252-253 (RK), Ala-269, Lys-273, and Lys-277. L-methionine is bound at residue Asp-246. Lys-277 contacts L-methionine.

The protein belongs to the AdoMet synthase family. In terms of assembly, homotetramer. Interacts with GRF3. Mn(2+) is required as a cofactor. The cofactor is Mg(2+). Co(2+) serves as cofactor. Requires K(+) as cofactor.

The protein resides in the cytoplasm. The catalysed reaction is L-methionine + ATP + H2O = S-adenosyl-L-methionine + phosphate + diphosphate. It participates in amino-acid biosynthesis; S-adenosyl-L-methionine biosynthesis; S-adenosyl-L-methionine from L-methionine: step 1/1. Inhibited by 5,5'-dithiobis-2-nitrobenzoic acid (DTNB) and N-ethylmaleimide (NEM) (in vitro). In terms of biological role, catalyzes the formation of S-adenosylmethionine from methionine and ATP. The reaction comprises two steps that are both catalyzed by the same enzyme: formation of S-adenosylmethionine (AdoMet) and triphosphate, and subsequent hydrolysis of the triphosphate. Involved in the biosynthesis of lignin. The protein is S-adenosylmethionine synthase 3 (METK3) of Arabidopsis thaliana (Mouse-ear cress).